The following is a 169-amino-acid chain: NADH-quinone oxidoreductase subunit B (169 aa).

Positions 42, 43, 107, and 136 each coordinate [4Fe-4S] cluster.

Belongs to the complex I 20 kDa subunit family. NDH-1 is composed of 14 different subunits. Subunits NuoB, C, D, E, F, and G constitute the peripheral sector of the complex. It depends on [4Fe-4S] cluster as a cofactor.

Its subcellular location is the cell inner membrane. It carries out the reaction a quinone + NADH + 5 H(+)(in) = a quinol + NAD(+) + 4 H(+)(out). NDH-1 shuttles electrons from NADH, via FMN and iron-sulfur (Fe-S) centers, to quinones in the respiratory chain. The immediate electron acceptor for the enzyme in this species is believed to be ubiquinone. Couples the redox reaction to proton translocation (for every two electrons transferred, four hydrogen ions are translocated across the cytoplasmic membrane), and thus conserves the redox energy in a proton gradient. This chain is NADH-quinone oxidoreductase subunit B, found in Sulfurimonas denitrificans (strain ATCC 33889 / DSM 1251) (Thiomicrospira denitrificans (strain ATCC 33889 / DSM 1251)).